The primary structure comprises 113 residues: Hydrogenase maturation factor HypA (113 aa).

His-2 is a Ni(2+) binding site. Positions 73, 76, 89, and 92 each coordinate Zn(2+).

Belongs to the HypA/HybF family.

Its function is as follows. Involved in the maturation of [NiFe] hydrogenases. Required for nickel insertion into the metal center of the hydrogenase. The chain is Hydrogenase maturation factor HypA from Chlorobium phaeobacteroides (strain BS1).